A 138-amino-acid polypeptide reads, in one-letter code: Cysteine desulfuration protein SufE (138 aa).

The active-site Cysteine persulfide intermediate is cysteine 51.

Belongs to the SufE family. As to quaternary structure, homodimer. Interacts with SufS.

The protein resides in the cytoplasm. The protein operates within cofactor biosynthesis; iron-sulfur cluster biosynthesis. Functionally, participates in cysteine desulfuration mediated by SufS. Cysteine desulfuration mobilizes sulfur from L-cysteine to yield L-alanine and constitutes an essential step in sulfur metabolism for biosynthesis of a variety of sulfur-containing biomolecules. Functions as a sulfur acceptor for SufS, by mediating the direct transfer of the sulfur atom from the S-sulfanylcysteine of SufS, an intermediate product of cysteine desulfuration process. The protein is Cysteine desulfuration protein SufE of Klebsiella pneumoniae subsp. pneumoniae (strain ATCC 700721 / MGH 78578).